A 364-amino-acid polypeptide reads, in one-letter code: MTTPLIEIRQIYKSYGNTPILNNVSLNVNHGEFLTLLGPSGCGKTTLLRLISGFEQPTQGEIFINGQCVNQLPPQKRDVHTVFQSYALFPHLSVFENVAFALRCKKTSNQEIKERVFDALKLVQLELLAERNVKQLSGGQQQRVAIARAIINRPQVLLLDEPLSSLDYRLRKAMQSELKQLQKTLNMTFIFVTHDQEEALSMSDRIVVFNHGHIEQIGTPKAVYETPANLHVAMFIGEANIFDIQVHTVKDQDIVTNIEGIQLSCKNTGNYQVNEWLHLIVRPEDIRVWSLSEVEKTEGMLPGRIVDIIYKGSTVDLKVELSSGKIINASEFFDEDDDKLEYTLHETVWVQWLPGWEVLLPYEG.

An ABC transporter domain is found at 6–236; that stretch reads IEIRQIYKSY…PANLHVAMFI (231 aa). 38-45 is an ATP binding site; sequence GPSGCGKT.

Belongs to the ABC transporter superfamily. Spermidine/putrescine importer (TC 3.A.1.11.1) family. As to quaternary structure, the complex is composed of two ATP-binding proteins (PotA), two transmembrane proteins (PotB and PotC) and a solute-binding protein (PotD).

Its subcellular location is the cell inner membrane. It catalyses the reaction ATP + H2O + polyamine-[polyamine-binding protein]Side 1 = ADP + phosphate + polyamineSide 2 + [polyamine-binding protein]Side 1.. Its function is as follows. Part of the ABC transporter complex PotABCD involved in spermidine/putrescine import. Responsible for energy coupling to the transport system. This Legionella pneumophila (strain Paris) protein is Spermidine/putrescine import ATP-binding protein PotA.